The sequence spans 395 residues: Digeranylgeranylglycerophospholipid reductase (395 aa).

Ala-15, Asp-34, Cys-45, Ala-46, Ala-48, Arg-97, Ala-121, Asp-276, and Gly-288 together coordinate FAD. Arg-329 contacts a 2,3-bis-O-(geranylgeranyl)-sn-glycerol 1-phospholipid.

This sequence belongs to the geranylgeranyl reductase family. DGGGPL reductase subfamily. Requires FAD as cofactor.

It carries out the reaction a 2,3-bis-O-phytanyl-sn-glycerol 1-phospholipid + 8 A = a 2,3-bis-O-(geranylgeranyl)-sn-glycerol 1-phospholipid + 8 AH2. The catalysed reaction is 2,3-bis-O-(phytanyl)-sn-glycerol 1-phosphate + 8 A = 2,3-bis-O-(geranylgeranyl)-sn-glycerol 1-phosphate + 8 AH2. The enzyme catalyses CDP-2,3-bis-O-(geranylgeranyl)-sn-glycerol + 8 AH2 = CDP-2,3-bis-O-(phytanyl)-sn-glycerol + 8 A. It catalyses the reaction archaetidylserine + 8 AH2 = 2,3-bis-O-phytanyl-sn-glycero-3-phospho-L-serine + 8 A. The protein operates within membrane lipid metabolism; glycerophospholipid metabolism. In terms of biological role, is involved in the reduction of 2,3-digeranylgeranylglycerophospholipids (unsaturated archaeols) into 2,3-diphytanylglycerophospholipids (saturated archaeols) in the biosynthesis of archaeal membrane lipids. Catalyzes the formation of archaetidic acid (2,3-di-O-phytanyl-sn-glyceryl phosphate) from 2,3-di-O-geranylgeranylglyceryl phosphate (DGGGP) via the hydrogenation of each double bond of the isoprenoid chains. Is also probably able to reduce double bonds of geranyl groups in CDP-2,3-bis-O-(geranylgeranyl)-sn-glycerol and archaetidylserine, thus acting at various stages in the biosynthesis of archaeal membrane lipids. In Thermococcus kodakarensis (strain ATCC BAA-918 / JCM 12380 / KOD1) (Pyrococcus kodakaraensis (strain KOD1)), this protein is Digeranylgeranylglycerophospholipid reductase.